We begin with the raw amino-acid sequence, 289 residues long: Ribosomal RNA small subunit methyltransferase A (289 aa).

Positions 33, 35, 60, 81, 111, and 130 each coordinate S-adenosyl-L-methionine.

It belongs to the class I-like SAM-binding methyltransferase superfamily. rRNA adenine N(6)-methyltransferase family. RsmA subfamily.

The protein localises to the cytoplasm. It catalyses the reaction adenosine(1518)/adenosine(1519) in 16S rRNA + 4 S-adenosyl-L-methionine = N(6)-dimethyladenosine(1518)/N(6)-dimethyladenosine(1519) in 16S rRNA + 4 S-adenosyl-L-homocysteine + 4 H(+). In terms of biological role, specifically dimethylates two adjacent adenosines (A1518 and A1519) in the loop of a conserved hairpin near the 3'-end of 16S rRNA in the 30S particle. May play a critical role in biogenesis of 30S subunits. The sequence is that of Ribosomal RNA small subunit methyltransferase A from Corynebacterium efficiens (strain DSM 44549 / YS-314 / AJ 12310 / JCM 11189 / NBRC 100395).